Reading from the N-terminus, the 545-residue chain is Phenylalanine--tRNA ligase beta subunit (545 aa).

The B5 domain occupies 270–346 (LEPKERLLTT…KGYGYENIKV (77 aa)). Residues D324, D330, E333, and D334 each coordinate Mg(2+).

It belongs to the phenylalanyl-tRNA synthetase beta subunit family. Type 2 subfamily. In terms of assembly, tetramer of two alpha and two beta subunits. Mg(2+) serves as cofactor.

It is found in the cytoplasm. It catalyses the reaction tRNA(Phe) + L-phenylalanine + ATP = L-phenylalanyl-tRNA(Phe) + AMP + diphosphate + H(+). The polypeptide is Phenylalanine--tRNA ligase beta subunit (Methanosarcina acetivorans (strain ATCC 35395 / DSM 2834 / JCM 12185 / C2A)).